The primary structure comprises 513 residues: Histidine ammonia-lyase (513 aa).

The segment at residues 144 to 146 (ASG) is a cross-link (5-imidazolinone (Ala-Gly)). A 2,3-didehydroalanine (Ser) modification is found at S145.

It belongs to the PAL/histidase family. In terms of processing, contains an active site 4-methylidene-imidazol-5-one (MIO), which is formed autocatalytically by cyclization and dehydration of residues Ala-Ser-Gly.

The protein resides in the cytoplasm. It catalyses the reaction L-histidine = trans-urocanate + NH4(+). It functions in the pathway amino-acid degradation; L-histidine degradation into L-glutamate; N-formimidoyl-L-glutamate from L-histidine: step 1/3. This is Histidine ammonia-lyase from Streptococcus pyogenes serotype M3 (strain ATCC BAA-595 / MGAS315).